A 205-amino-acid chain; its full sequence is MPAPAFPSIAGLLLAGGRATRMDGVDKGLQLLDGTPLALHVLRRLTPQVDETLISANRHADRYAELSAPFDARIIADETPDFPGPLAGLLAGMRAARAPLVACSPCDTPYLPVDLVARLRAALDAQQADIAMAVTVDAQQVRSPQPTFALLRTSLADDLAARLAAGDRKVRAWYARHKTVEVEFRDERAFYNANSWQELAALARR.

Residues 14–16, Lys27, Asp77, and Asp107 contribute to the GTP site; that span reads LAG. A Mg(2+)-binding site is contributed by Asp107.

Belongs to the MobA family. In terms of assembly, monomer. Mg(2+) is required as a cofactor.

The protein localises to the cytoplasm. The catalysed reaction is Mo-molybdopterin + GTP + H(+) = Mo-molybdopterin guanine dinucleotide + diphosphate. In terms of biological role, transfers a GMP moiety from GTP to Mo-molybdopterin (Mo-MPT) cofactor (Moco or molybdenum cofactor) to form Mo-molybdopterin guanine dinucleotide (Mo-MGD) cofactor. In Burkholderia cenocepacia (strain HI2424), this protein is Molybdenum cofactor guanylyltransferase.